The primary structure comprises 941 residues: Isoleucine--tRNA ligase (941 aa).

The 'HIGH' region signature appears at 58–68 (PYANGNIHLGH). Glu564 contributes to the L-isoleucyl-5'-AMP binding site. A 'KMSKS' region motif is present at residues 605-609 (KMSKS). Lys608 contributes to the ATP binding site. Zn(2+) is bound by residues Cys904, Cys907, Cys924, and Cys927.

Belongs to the class-I aminoacyl-tRNA synthetase family. IleS type 1 subfamily. As to quaternary structure, monomer. Requires Zn(2+) as cofactor.

The protein resides in the cytoplasm. It carries out the reaction tRNA(Ile) + L-isoleucine + ATP = L-isoleucyl-tRNA(Ile) + AMP + diphosphate. Its function is as follows. Catalyzes the attachment of isoleucine to tRNA(Ile). As IleRS can inadvertently accommodate and process structurally similar amino acids such as valine, to avoid such errors it has two additional distinct tRNA(Ile)-dependent editing activities. One activity is designated as 'pretransfer' editing and involves the hydrolysis of activated Val-AMP. The other activity is designated 'posttransfer' editing and involves deacylation of mischarged Val-tRNA(Ile). This Hahella chejuensis (strain KCTC 2396) protein is Isoleucine--tRNA ligase.